The following is a 122-amino-acid chain: Ribosome-binding factor A (122 aa).

The protein belongs to the RbfA family. Monomer. Binds 30S ribosomal subunits, but not 50S ribosomal subunits or 70S ribosomes.

The protein localises to the cytoplasm. One of several proteins that assist in the late maturation steps of the functional core of the 30S ribosomal subunit. Associates with free 30S ribosomal subunits (but not with 30S subunits that are part of 70S ribosomes or polysomes). Required for efficient processing of 16S rRNA. May interact with the 5'-terminal helix region of 16S rRNA. The chain is Ribosome-binding factor A from Opitutus terrae (strain DSM 11246 / JCM 15787 / PB90-1).